Consider the following 209-residue polypeptide: ATP-dependent Clp protease proteolytic subunit 2 (209 aa).

The active-site Nucleophile is the S107. The active site involves H132.

The protein belongs to the peptidase S14 family. Fourteen ClpP subunits assemble into 2 heptameric rings which stack back to back to give a disk-like structure with a central cavity, resembling the structure of eukaryotic proteasomes.

Its subcellular location is the cytoplasm. It carries out the reaction Hydrolysis of proteins to small peptides in the presence of ATP and magnesium. alpha-casein is the usual test substrate. In the absence of ATP, only oligopeptides shorter than five residues are hydrolyzed (such as succinyl-Leu-Tyr-|-NHMec, and Leu-Tyr-Leu-|-Tyr-Trp, in which cleavage of the -Tyr-|-Leu- and -Tyr-|-Trp bonds also occurs).. Cleaves peptides in various proteins in a process that requires ATP hydrolysis. Has a chymotrypsin-like activity. Plays a major role in the degradation of misfolded proteins. This is ATP-dependent Clp protease proteolytic subunit 2 from Corynebacterium jeikeium (strain K411).